The chain runs to 71 residues: Conotoxin Tx11.3 (71 aa).

The first 19 residues, 1–19, serve as a signal peptide directing secretion; sequence MKLCVTFLLVLVILPSVTG. The propeptide occupies 20 to 47; sequence VKSSERTLSGAALRGDRGTCSGRGQECK. 4 disulfides stabilise this stretch: Cys-39-Cys-53, Cys-46-Cys-58, Cys-52-Cys-63, and Cys-57-Cys-70.

The protein belongs to the I1 superfamily. Expressed by the venom duct.

It localises to the secreted. The sequence is that of Conotoxin Tx11.3 from Conus textile (Cloth-of-gold cone).